The sequence spans 244 residues: 5-oxoprolinase subunit A (244 aa).

This sequence belongs to the LamB/PxpA family. As to quaternary structure, forms a complex composed of PxpA, PxpB and PxpC.

It catalyses the reaction 5-oxo-L-proline + ATP + 2 H2O = L-glutamate + ADP + phosphate + H(+). In terms of biological role, catalyzes the cleavage of 5-oxoproline to form L-glutamate coupled to the hydrolysis of ATP to ADP and inorganic phosphate. This is 5-oxoprolinase subunit A from Salmonella heidelberg (strain SL476).